Reading from the N-terminus, the 366-residue chain is Aminomethyltransferase (366 aa).

The protein belongs to the GcvT family. As to quaternary structure, the glycine cleavage system is composed of four proteins: P, T, L and H.

The catalysed reaction is N(6)-[(R)-S(8)-aminomethyldihydrolipoyl]-L-lysyl-[protein] + (6S)-5,6,7,8-tetrahydrofolate = N(6)-[(R)-dihydrolipoyl]-L-lysyl-[protein] + (6R)-5,10-methylene-5,6,7,8-tetrahydrofolate + NH4(+). Functionally, the glycine cleavage system catalyzes the degradation of glycine. This is Aminomethyltransferase from Bordetella avium (strain 197N).